The chain runs to 233 residues: Purine nucleoside phosphorylase DeoD-type (233 aa).

H4 lines the a purine D-ribonucleoside pocket. Residues G20, R24, R43, and 87–90 (RVGT) each bind phosphate. A purine D-ribonucleoside contacts are provided by residues 179 to 181 (EME) and 203 to 204 (SD). D204 functions as the Proton donor in the catalytic mechanism.

Belongs to the PNP/UDP phosphorylase family. In terms of assembly, homohexamer; trimer of homodimers.

It carries out the reaction a purine D-ribonucleoside + phosphate = a purine nucleobase + alpha-D-ribose 1-phosphate. It catalyses the reaction a purine 2'-deoxy-D-ribonucleoside + phosphate = a purine nucleobase + 2-deoxy-alpha-D-ribose 1-phosphate. In terms of biological role, catalyzes the reversible phosphorolytic breakdown of the N-glycosidic bond in the beta-(deoxy)ribonucleoside molecules, with the formation of the corresponding free purine bases and pentose-1-phosphate. The polypeptide is Purine nucleoside phosphorylase DeoD-type (Clostridium novyi (strain NT)).